A 190-amino-acid chain; its full sequence is Small ribosomal subunit protein uS5 (190 aa).

Residues 19–82 enclose the S5 DRBM domain; it reads IIDKLVTINR…ERAKRSMIRV (64 aa). Positions 161–190 are disordered; the sequence is SVASRRGKKVSDILGRREPVAGQEGEEAHA. The segment covering 169 to 179 has biased composition (basic and acidic residues); that stretch reads KVSDILGRREP.

It belongs to the universal ribosomal protein uS5 family. In terms of assembly, part of the 30S ribosomal subunit. Contacts proteins S4 and S8.

In terms of biological role, with S4 and S12 plays an important role in translational accuracy. Its function is as follows. Located at the back of the 30S subunit body where it stabilizes the conformation of the head with respect to the body. The protein is Small ribosomal subunit protein uS5 of Granulibacter bethesdensis (strain ATCC BAA-1260 / CGDNIH1).